The primary structure comprises 100 residues: Urease subunit gamma (100 aa).

It belongs to the urease gamma subunit family. Heterotrimer of UreA (gamma), UreB (beta) and UreC (alpha) subunits. Three heterotrimers associate to form the active enzyme.

Its subcellular location is the cytoplasm. It catalyses the reaction urea + 2 H2O + H(+) = hydrogencarbonate + 2 NH4(+). It functions in the pathway nitrogen metabolism; urea degradation; CO(2) and NH(3) from urea (urease route): step 1/1. The chain is Urease subunit gamma from Rhizobium etli (strain ATCC 51251 / DSM 11541 / JCM 21823 / NBRC 15573 / CFN 42).